The following is a 1166-amino-acid chain: Calcium-activated potassium channel subunit alpha-1 (1166 aa).

Residues 1 to 15 (MANGGGGGGGGGGGS) show a composition bias toward gly residues. Disordered stretches follow at residues 1 to 20 (MANGGGGGGGGGGGSSLRMS) and 30 to 51 (LDASSSSSSSSSSSSSSSSVHE). The Extracellular portion of the chain corresponds to 1 to 74 (MANGGGGGGG…VPCDSRGQRM (74 aa)). A compositionally biased stretch (low complexity) spans 33-48 (SSSSSSSSSSSSSSSS). The helical transmembrane segment at 75–95 (WWAFLASSMVTFFGGLFIILL) threads the bilayer. Over 96–166 (WRTLKYLWTV…MISAQTLTGR (71 aa)) the chain is Cytoplasmic. S-palmitoyl cysteine attachment occurs at residues Cys-106, Cys-107, and Cys-109. Position 139 is a phosphothreonine; by CamK2 (Thr-139). A helical transmembrane segment spans residues 167–187 (VLVVLVFALSIGALVIYFIDS). Over 188-202 (SNPIESCQNFYKDFT) the chain is Extracellular. A helical membrane pass occupies residues 203–223 (LQIDMAFNVFFLLYFGLRFIA). Over 224 to 227 (ANDK) the chain is Cytoplasmic. Residues 228–248 (LWFWLEVNSVVDFFTVPPVFV) traverse the membrane as a helical segment. Residues 249–252 (SVYL) lie on the Extracellular side of the membrane. A helical; Voltage-sensor membrane pass occupies residues 253–273 (NRSWLGLRFLRALRLIQFSEI). Over 274–288 (LQFLNILKTSNSIKL) the chain is Cytoplasmic. Residues 289–309 (VNLLSIFISTWLTAAGFIHLV) form a helical membrane-spanning segment. Residues 310-323 (ENSGDPWENFQNNQ) are Extracellular-facing. An intramembrane region (pore-forming) is located at residues 324 to 346 (ALTYWECVYLLMVTMSTVGYGDV). The short motif at 340–343 (TVGY) is the Selectivity for potassium element. The Extracellular segment spans residues 347 to 355 (YAKTTLGRL). A helical membrane pass occupies residues 356-376 (FMVFFILGGLAMFASYVPEII). Topologically, residues 377 to 1166 (ELIGNRKKYG…KQKYVQEERL (790 aa)) are cytoplasmic. Residues 395 to 537 (RKHIVVCGHI…WNWKEGDDAI (143 aa)) form the RCK N-terminal 1 domain. Mg(2+) contacts are provided by Glu-427, Gln-450, and Glu-452. The segment S7 stretch occupies residues 544-564 (LGFIAQSCLAQGLSTMLANLF). The interval 601–621 (LSFPTVCELCFVKLKLLMIAI) is segment S8. Residues 665-669 (CKACH) are heme-binding motif. Residues 689–717 (EQPSTLSPKKKQRNGGMRNSPSSSPKLMR) are disordered. At Thr-693 the chain carries Phosphothreonine. Residues Ser-695, Ser-708, and Ser-712 each carry the phosphoserine modification. A segment S9 region spans residues 767-787 (VLSGHVVVCIFGDVSSALIGL). In terms of domain architecture, RCK N-terminal 2 spans 769–913 (SGHVVVCIFG…MDRSSPDNSP (145 aa)). Thr-900 carries the phosphothreonine modification. Residues Ser-908 and Ser-912 each carry the phosphoserine modification. The short motif at 933 to 955 (TELVNDTNVQFLDQDDDDDPDTE) is the Calcium bowl element. Ca(2+) contacts are provided by Gln-942, Asp-945, Asp-948, and Asp-950. Residues 962 to 982 (FACGTAFAVSVLDSLMSATYF) form a segment S10 region. The segment covering 1116-1141 (RASLSHSSHSSQSSSKKSSSVHSIPS) has biased composition (low complexity). Positions 1116-1166 (RASLSHSSHSSQSSSKKSSSVHSIPSTANRQNRPKSRESRDKQKYVQEERL) are disordered. Basic and acidic residues predominate over residues 1150 to 1166 (KSRESRDKQKYVQEERL). Ser-1151 and Ser-1154 each carry phosphoserine; by PKG.

Belongs to the potassium channel family. Calcium-activated (TC 1.A.1.3) subfamily. KCa1.1/KCNMA1 sub-subfamily. In terms of assembly, homotetramer; which constitutes the calcium-activated potassium channel. Interacts with beta subunits KCNMB1, KCNMB2, KCNMB3 and KCNMB4. Interacts with gamma subunits LRRC26, LRRC38, LRRC52 and LRRC55. Beta and gamma subunits are accessory, and modulate its activity. Interacts with RAB11B. In terms of processing, phosphorylated. Stimulated by PKG, but not by PKA. In smooth muscles, phosphorylation affects its activity. Phosphorylated. Exclusively stimulated by PKA. In smooth muscles, phosphorylation affects its activity. Post-translationally, incremental phosphorylation of Thr-139 of the KCNMA1 tetramer changes the response to ethanol from increased activation to inhibition of channel activity. In terms of processing, palmitoylation by ZDHHC22 and ZDHHC23 within the intracellular linker between the S0 and S1 transmembrane domains regulates localization to the plasma membrane. Depalmitoylated by LYPLA1 and LYPLAL1, leading to retard exit from the trans-Golgi network.

The protein resides in the cell membrane. The catalysed reaction is K(+)(in) = K(+)(out). With respect to regulation, ethanol and carbon monoxide-bound heme increase channel activation. Heme inhibits channel activation. Phosphorylation of Thr-139 leads to inhibition of channel activity by ethanol. Functionally, potassium channel activated by both membrane depolarization or increase in cytosolic Ca(2+) that mediates export of K(+). It is also activated by concentration of cytosolic Mg(2+). Its activation dampens the excitatory events that elevate the cytosolic Ca(2+) concentration and/or depolarize the cell membrane. It therefore contributes to repolarization of the membrane potential. Plays a key role in controlling excitability in a number of systems, such as regulation of the contraction of smooth muscle, the tuning of hair cells in the cochlea, regulation of transmitter release, and innate immunity. In smooth muscles, its activation by high level of Ca(2+), caused by ryanodine receptors in the sarcoplasmic reticulum, regulates the membrane potential. In cochlea cells, its number and kinetic properties partly determine the characteristic frequency of each hair cell and thereby helps to establish a tonotopic map. Kinetics of KCNMA1 channels are determined by alternative splicing, phosphorylation status and its combination with modulating beta subunits. Highly sensitive to both iberiotoxin (IbTx) and charybdotoxin (CTX). This is Calcium-activated potassium channel subunit alpha-1 (KCNMA1) from Bos taurus (Bovine).